The following is a 118-amino-acid chain: Acetylcholine receptor subunit beta (118 aa).

The signal sequence occupies residues 1–15; it reads APTVALLLLCALCSA.

The protein belongs to the ligand-gated ion channel (TC 1.A.9) family. Acetylcholine receptor (TC 1.A.9.1) subfamily. Beta-1/CHRNB1 sub-subfamily. In terms of assembly, pentamer of two alpha chains, and one each of the beta, delta, and gamma chains.

Its subcellular location is the postsynaptic cell membrane. It localises to the cell membrane. The enzyme catalyses K(+)(in) = K(+)(out). It catalyses the reaction Na(+)(in) = Na(+)(out). Functionally, after binding acetylcholine, the AChR responds by an extensive change in conformation that affects all subunits and leads to opening of an ion-conducting channel across the plasma membrane. The polypeptide is Acetylcholine receptor subunit beta (CHRNB1) (Gallus gallus (Chicken)).